The chain runs to 466 residues: Metaxin-1 (466 aa).

The segment covering M1–P19 has biased composition (low complexity). Positions M1–G133 are disordered. Residues W20–P36 are compositionally biased toward polar residues. Positions A90–P110 are enriched in low complexity. Residues K187, K190, K227, and K317 each participate in a glycyl lysine isopeptide (Lys-Gly) (interchain with G-Cter in ubiquitin) cross-link. A helical membrane pass occupies residues I421 to V441.

The protein belongs to the metaxin family. As to quaternary structure, interacts with MTX2/metaxin-2. Associates with the mitochondrial contact site and cristae organizing system (MICOS) complex, composed of at least MICOS10/MIC10, CHCHD3/MIC19, CHCHD6/MIC25, APOOL/MIC27, IMMT/MIC60, APOO/MIC23/MIC26 and QIL1/MIC13. This complex was also known under the names MINOS or MitOS complex. The MICOS complex associates with mitochondrial outer membrane proteins SAMM50, MTX1 and MTX2 (together described as components of the mitochondrial outer membrane sorting assembly machinery (SAM) complex) and DNAJC11, mitochondrial inner membrane protein TMEM11 and with HSPA9. The MICOS and SAM complexes together with DNAJC11 are part of a large protein complex spanning both membranes termed the mitochondrial intermembrane space bridging (MIB) complex. Interacts with ARMC1. Ubiquitinated by PRKN during mitophagy, leading to its degradation and enhancement of mitophagy. Deubiquitinated by USP30.

It is found in the membrane. The protein resides in the mitochondrion outer membrane. Functionally, involved in transport of proteins into the mitochondrion. Essential for embryonic development. The polypeptide is Metaxin-1 (MTX1) (Homo sapiens (Human)).